The sequence spans 199 residues: Recombination protein RecR (199 aa).

A C4-type zinc finger spans residues cysteine 57 to cysteine 72. Positions arginine 80–proline 175 constitute a Toprim domain.

The protein belongs to the RecR family.

In terms of biological role, may play a role in DNA repair. It seems to be involved in an RecBC-independent recombinational process of DNA repair. It may act with RecF and RecO. The sequence is that of Recombination protein RecR from Carboxydothermus hydrogenoformans (strain ATCC BAA-161 / DSM 6008 / Z-2901).